We begin with the raw amino-acid sequence, 523 residues long: Probable DNA ligase (523 aa).

Glutamate 210 is an ATP binding site. Residue lysine 212 is the N6-AMP-lysine intermediate of the active site. Arginine 217, arginine 232, glutamate 261, phenylalanine 317, arginine 388, and lysine 394 together coordinate ATP.

The protein belongs to the ATP-dependent DNA ligase family. It depends on Mg(2+) as a cofactor.

The enzyme catalyses ATP + (deoxyribonucleotide)n-3'-hydroxyl + 5'-phospho-(deoxyribonucleotide)m = (deoxyribonucleotide)n+m + AMP + diphosphate.. DNA ligase that seals nicks in double-stranded DNA during DNA replication, DNA recombination and DNA repair. The sequence is that of Probable DNA ligase from Nocardia farcinica (strain IFM 10152).